The sequence spans 97 residues: Putative septation protein SpoVG (97 aa).

This sequence belongs to the SpoVG family.

Functionally, essential for sporulation. Interferes with or is a negative regulator of the pathway leading to asymmetric septation. The chain is Putative septation protein SpoVG from Bacillus velezensis (strain DSM 23117 / BGSC 10A6 / LMG 26770 / FZB42) (Bacillus amyloliquefaciens subsp. plantarum).